Consider the following 427-residue polypeptide: MNIAVVGLSHKTAPVEIREKLSIQEAKLEEALTHLRSYPHIEEVTVISTCNRLEIYAVVTDTEKGVVEITQFLSETGNIPLATLRRYLFTLLHEDAVRHLMRVAAGLESLVLGEGQILAQVRTTHKLGQKYKGVGRLLDRLFKQAITAGRRVRTETDIGTGAVSISSAAVELVHRQVDLSSQKTVIIGAGKMACLLVKHLLAKGATDITIVNRSQRRSQDLANQFPQAQLTLCPLTDMFTAIAAGDIVFTSTGATEPILNCENLTGCVINRKSLMLVDISVPRNVAADVHAMEQVRAFNVDDLKEVVAQNQASRRQMARQAEALLEEEIAAFDLWWRSLETVPTISSLRSKVEDIREQELEKALSRLGSEFAEKHQEVIEALTRGIVNKILHEPMVQLRAQQDIEARKQCLRSLKMLFDLEVEEQFG.

Substrate-binding positions include 49–52 (TCNR), Ser-109, 114–116 (EGQ), and Gln-120. Cys-50 (nucleophile) is an active-site residue. 188-193 (GAGKMA) serves as a coordination point for NADP(+).

It belongs to the glutamyl-tRNA reductase family. In terms of assembly, homodimer.

It catalyses the reaction (S)-4-amino-5-oxopentanoate + tRNA(Glu) + NADP(+) = L-glutamyl-tRNA(Glu) + NADPH + H(+). Its pathway is porphyrin-containing compound metabolism; protoporphyrin-IX biosynthesis; 5-aminolevulinate from L-glutamyl-tRNA(Glu): step 1/2. It participates in porphyrin-containing compound metabolism; chlorophyll biosynthesis. Its activity is regulated as follows. Feedback inhibition by heme. Functionally, catalyzes the NADPH-dependent reduction of glutamyl-tRNA(Glu) to glutamate 1-semialdehyde (GSA). The protein is Glutamyl-tRNA reductase of Synechocystis sp. (strain ATCC 27184 / PCC 6803 / Kazusa).